A 204-amino-acid polypeptide reads, in one-letter code: High frequency lysogenization protein HflD homolog (204 aa).

This sequence belongs to the HflD family.

The protein localises to the cytoplasm. The protein resides in the cell inner membrane. This is High frequency lysogenization protein HflD homolog from Xanthomonas campestris pv. campestris (strain ATCC 33913 / DSM 3586 / NCPPB 528 / LMG 568 / P 25).